Reading from the N-terminus, the 61-residue chain is ERMES regulator 1 (61 aa).

The Mitochondrial intermembrane segment spans residues 1 to 20 (MLPNLRRIFASFRTEEEERS). A helical membrane pass occupies residues 21–43 (YSRKAFFHLIGYITCSVLFSWLV). At 44-61 (RKKVISSPVVSSPIHALS) the chain is on the cytoplasmic side.

This sequence belongs to the EMR1 family. As to quaternary structure, interacts with the ER-mitochondria encounter structure (ERMES) complex. Interacts with mdm12. Interacts with mdm34.

The protein localises to the mitochondrion outer membrane. Its function is as follows. Mediates the formation of endoplasmic reticulum (ER)-mitochondria encounter structure (ERMES) foci, thereby contributing to the formation of ER-mitochondrial contact sites. The polypeptide is ERMES regulator 1 (Schizosaccharomyces pombe (strain 972 / ATCC 24843) (Fission yeast)).